Reading from the N-terminus, the 1343-residue chain is DNA-directed RNA polymerase subunit beta (1343 aa).

It belongs to the RNA polymerase beta chain family. As to quaternary structure, the RNAP catalytic core consists of 2 alpha, 1 beta, 1 beta' and 1 omega subunit. When a sigma factor is associated with the core the holoenzyme is formed, which can initiate transcription.

It catalyses the reaction RNA(n) + a ribonucleoside 5'-triphosphate = RNA(n+1) + diphosphate. Functionally, DNA-dependent RNA polymerase catalyzes the transcription of DNA into RNA using the four ribonucleoside triphosphates as substrates. The sequence is that of DNA-directed RNA polymerase subunit beta from Haemophilus influenzae (strain PittGG).